A 293-amino-acid chain; its full sequence is Homoserine kinase (293 aa).

84–94 (PLSRGLGSSSA) contacts ATP.

Belongs to the GHMP kinase family. Homoserine kinase subfamily.

The protein localises to the cytoplasm. It carries out the reaction L-homoserine + ATP = O-phospho-L-homoserine + ADP + H(+). It functions in the pathway amino-acid biosynthesis; L-threonine biosynthesis; L-threonine from L-aspartate: step 4/5. Functionally, catalyzes the ATP-dependent phosphorylation of L-homoserine to L-homoserine phosphate. This is Homoserine kinase from Nautilia profundicola (strain ATCC BAA-1463 / DSM 18972 / AmH).